Reading from the N-terminus, the 363-residue chain is MSKNYHIAVLPGDGIGPEVMTQALKVLNAVRNRFAMRITTSHYDVGGAAIDNHGQPLPPATVEGCEQADAVLFGSVGGPKWEHLPPDQQPERGALLPLRKHFKLFSNLRPAKLYQGLEAFCPLRADIAANGFDIQCVRELTGGIYFGQPKGREGSGQYEKAFDTEVYHRFEIERIARIAFESARKRRHKVTSIDKANVLQSSILWREIVNEIATEYPDVELAHMYIDNATMQLIKDPSQFDVLLCSNLFGDILSDECAMITGSMGMLPSASLNEQGFGLYEPAGGSAPDIAGKNIANPIAQILSLALLLRYSLDADDAASAIERAINRALEEGIRTGDLARGAAAVSTDEMGDIIARYVAEGV.

78-91 (GPKWEHLPPDQQPE) is a binding site for NAD(+). The substrate site is built by arginine 99, arginine 109, arginine 138, and aspartate 227. Positions 227, 251, and 255 each coordinate Mg(2+). 285 to 297 (GSAPDIAGKNIAN) lines the NAD(+) pocket.

This sequence belongs to the isocitrate and isopropylmalate dehydrogenases family. LeuB type 1 subfamily. In terms of assembly, homodimer. It depends on Mg(2+) as a cofactor. Mn(2+) serves as cofactor.

The protein resides in the cytoplasm. It catalyses the reaction (2R,3S)-3-isopropylmalate + NAD(+) = 4-methyl-2-oxopentanoate + CO2 + NADH. It functions in the pathway amino-acid biosynthesis; L-leucine biosynthesis; L-leucine from 3-methyl-2-oxobutanoate: step 3/4. Functionally, catalyzes the oxidation of 3-carboxy-2-hydroxy-4-methylpentanoate (3-isopropylmalate) to 3-carboxy-4-methyl-2-oxopentanoate. The product decarboxylates to 4-methyl-2 oxopentanoate. The polypeptide is 3-isopropylmalate dehydrogenase (Shigella flexneri).